Here is an 89-residue protein sequence, read N- to C-terminus: Small ribosomal subunit protein uS15 (89 aa).

The protein belongs to the universal ribosomal protein uS15 family. In terms of assembly, part of the 30S ribosomal subunit. Forms a bridge to the 50S subunit in the 70S ribosome, contacting the 23S rRNA.

In terms of biological role, one of the primary rRNA binding proteins, it binds directly to 16S rRNA where it helps nucleate assembly of the platform of the 30S subunit by binding and bridging several RNA helices of the 16S rRNA. Its function is as follows. Forms an intersubunit bridge (bridge B4) with the 23S rRNA of the 50S subunit in the ribosome. The sequence is that of Small ribosomal subunit protein uS15 from Bradyrhizobium sp. (strain ORS 278).